A 358-amino-acid polypeptide reads, in one-letter code: Arginase (358 aa).

Residues His-146, Asp-174, His-176, and Asp-178 each coordinate Mn(2+). Residues 176 to 180 (HADIN), 187 to 189 (SGN), and Asp-233 contribute to the substrate site. 2 residues coordinate Mn(2+): Asp-280 and Asp-282. Residues Thr-294 and Glu-325 each coordinate substrate.

This sequence belongs to the arginase family. As to quaternary structure, homohexamer. The cofactor is Mn(2+).

The protein localises to the cytoplasm. The catalysed reaction is L-arginine + H2O = urea + L-ornithine. The protein operates within nitrogen metabolism; urea cycle; L-ornithine and urea from L-arginine: step 1/1. This chain is Arginase (aga-1), found in Neurospora crassa (strain ATCC 24698 / 74-OR23-1A / CBS 708.71 / DSM 1257 / FGSC 987).